Here is a 90-residue protein sequence, read N- to C-terminus: Large ribosomal subunit protein bL27 (90 aa).

Over residues 1–13 (MATKKSGGSSSNG) the composition is skewed to low complexity. The segment at 1–20 (MATKKSGGSSSNGRDSRGRR) is disordered.

The protein belongs to the bacterial ribosomal protein bL27 family.

The polypeptide is Large ribosomal subunit protein bL27 (Anaplasma marginale (strain Florida)).